The primary structure comprises 119 residues: Large ribosomal subunit protein bL20 (119 aa).

Belongs to the bacterial ribosomal protein bL20 family.

Functionally, binds directly to 23S ribosomal RNA and is necessary for the in vitro assembly process of the 50S ribosomal subunit. It is not involved in the protein synthesizing functions of that subunit. This Shewanella amazonensis (strain ATCC BAA-1098 / SB2B) protein is Large ribosomal subunit protein bL20.